A 341-amino-acid polypeptide reads, in one-letter code: Anthranilate phosphoribosyltransferase (341 aa).

Residues glycine 81, 84–85 (GD), 91–94 (NVST), 109–117 (KHGNRSVSS), and serine 121 each bind 5-phospho-alpha-D-ribose 1-diphosphate. Glycine 81 provides a ligand contact to anthranilate. Mg(2+) is bound at residue serine 93. An anthranilate-binding site is contributed by asparagine 112. Arginine 167 is an anthranilate binding site. Residues aspartate 226 and glutamate 227 each contribute to the Mg(2+) site.

The protein belongs to the anthranilate phosphoribosyltransferase family. In terms of assembly, homodimer. Requires Mg(2+) as cofactor.

The catalysed reaction is N-(5-phospho-beta-D-ribosyl)anthranilate + diphosphate = 5-phospho-alpha-D-ribose 1-diphosphate + anthranilate. The protein operates within amino-acid biosynthesis; L-tryptophan biosynthesis; L-tryptophan from chorismate: step 2/5. In terms of biological role, catalyzes the transfer of the phosphoribosyl group of 5-phosphorylribose-1-pyrophosphate (PRPP) to anthranilate to yield N-(5'-phosphoribosyl)-anthranilate (PRA). This chain is Anthranilate phosphoribosyltransferase, found in Teredinibacter turnerae (strain ATCC 39867 / T7901).